We begin with the raw amino-acid sequence, 143 residues long: Large ribosomal subunit protein bL17 (143 aa).

It belongs to the bacterial ribosomal protein bL17 family. As to quaternary structure, part of the 50S ribosomal subunit. Contacts protein L32.

The chain is Large ribosomal subunit protein bL17 from Chelativorans sp. (strain BNC1).